Here is a 341-residue protein sequence, read N- to C-terminus: L-threonine 3-dehydrogenase (341 aa).

Zn(2+) is bound at residue Cys38. Active-site charge relay system residues include Thr40 and His43. Positions 63, 64, 93, 96, 99, and 107 each coordinate Zn(2+). NAD(+)-binding positions include Ile175, Asp195, Arg200, 262-264 (LGI), and 286-287 (IY).

Belongs to the zinc-containing alcohol dehydrogenase family. Homotetramer. Zn(2+) is required as a cofactor.

The protein localises to the cytoplasm. It carries out the reaction L-threonine + NAD(+) = (2S)-2-amino-3-oxobutanoate + NADH + H(+). Its pathway is amino-acid degradation; L-threonine degradation via oxydo-reductase pathway; glycine from L-threonine: step 1/2. In terms of biological role, catalyzes the NAD(+)-dependent oxidation of L-threonine to 2-amino-3-ketobutyrate. This Klebsiella pneumoniae subsp. pneumoniae (strain ATCC 700721 / MGH 78578) protein is L-threonine 3-dehydrogenase.